Reading from the N-terminus, the 957-residue chain is Glycine dehydrogenase (decarboxylating) (957 aa).

Lys-708 carries the N6-(pyridoxal phosphate)lysine modification.

This sequence belongs to the GcvP family. As to quaternary structure, the glycine cleavage system is composed of four proteins: P, T, L and H. The cofactor is pyridoxal 5'-phosphate.

It catalyses the reaction N(6)-[(R)-lipoyl]-L-lysyl-[glycine-cleavage complex H protein] + glycine + H(+) = N(6)-[(R)-S(8)-aminomethyldihydrolipoyl]-L-lysyl-[glycine-cleavage complex H protein] + CO2. In terms of biological role, the glycine cleavage system catalyzes the degradation of glycine. The P protein binds the alpha-amino group of glycine through its pyridoxal phosphate cofactor; CO(2) is released and the remaining methylamine moiety is then transferred to the lipoamide cofactor of the H protein. This chain is Glycine dehydrogenase (decarboxylating), found in Salmonella newport (strain SL254).